Here is a 400-residue protein sequence, read N- to C-terminus: Phosphoglycerate kinase (400 aa).

Substrate contacts are provided by residues 20–22 (DLN), R35, 58–61 (HQGR), R115, and R155. Residues E330 and 356–359 (GGDT) each bind ATP.

Belongs to the phosphoglycerate kinase family. Monomer.

Its subcellular location is the cytoplasm. It catalyses the reaction (2R)-3-phosphoglycerate + ATP = (2R)-3-phospho-glyceroyl phosphate + ADP. The protein operates within carbohydrate degradation; glycolysis; pyruvate from D-glyceraldehyde 3-phosphate: step 2/5. The protein is Phosphoglycerate kinase of Haloarcula marismortui (strain ATCC 43049 / DSM 3752 / JCM 8966 / VKM B-1809) (Halobacterium marismortui).